Consider the following 86-residue polypeptide: uncharacterized protein (86 aa).

2 consecutive transmembrane segments (helical) span residues 20 to 38 (IQFW…SVYL) and 47 to 63 (FSTF…TKGV). The disordered stretch occupies residues 67 to 86 (LSQRREQGKEQGREQGREQE). Residues 69–86 (QRREQGKEQGREQGREQE) are compositionally biased toward basic and acidic residues.

The protein localises to the cell membrane. This is an uncharacterized protein from Haemophilus influenzae (strain ATCC 51907 / DSM 11121 / KW20 / Rd).